The sequence spans 726 residues: X-ray repair cross-complementing protein 5 (726 aa).

The VWFA domain maps to 8–160; sequence AVVLCMDVGL…ANLKKAEITL (153 aa). The leucine-zipper stretch occupies residues 137-164; the sequence is LSSPFSVDQLEVIIANLKKAEITLQFFL. Over residues 175 to 186 the composition is skewed to low complexity; that stretch reads GSSNNRGNAGSS. The disordered stretch occupies residues 175 to 198; sequence GSSNNRGNAGSSDRGCGPGKGLSD. The Ku domain maps to 253 to 449; that stretch reads GSSLSIRIVG…NKKFTPTESQ (197 aa). Positions 714-722 match the EEXXXDL motif motif; that stretch reads EDEGDVDDL.

Belongs to the ku80 family. Heterodimer composed of xrcc5/Ku80 and xrcc6/Ku70. In terms of processing, ubiquitinated via 'Lys-48'-linked polyubiquitination at DNA double strand break sites (DSBs), leading to its release from DSBs and subsequent proteasomal degradation. Polyubiquitination is not required for completion of NHEJ. As to expression, expressed at high levels in oocyte and testis.

It localises to the nucleus. In terms of biological role, single-stranded DNA-dependent ATP-dependent helicase that plays a key role in DNA non-homologous end joining (NHEJ). This chain is X-ray repair cross-complementing protein 5, found in Xenopus laevis (African clawed frog).